A 538-amino-acid polypeptide reads, in one-letter code: CTP synthase (538 aa).

Positions 1 to 267 (MDRAKFIFVT…LTPIARRFNL (267 aa)) are amidoligase domain. Ser15 contacts CTP. Residue Ser15 coordinates UTP. Residues 16-21 (SLGKGI) and Asp73 contribute to the ATP site. Asp73 and Glu141 together coordinate Mg(2+). Residues 148–150 (DME), 188–193 (KTKPTQ), and Lys224 each bind CTP. UTP contacts are provided by residues 188 to 193 (KTKPTQ) and Lys224. Residues 292–538 (KIGFVGKYLS…DFIKSALSKS (247 aa)) form the Glutamine amidotransferase type-1 domain. L-glutamine is bound at residue Gly351. The active-site Nucleophile; for glutamine hydrolysis is the Cys378. Residues 379-382 (LGMQ), Glu402, and Arg469 contribute to the L-glutamine site. Residues His513 and Glu515 contribute to the active site.

Belongs to the CTP synthase family. As to quaternary structure, homotetramer.

It carries out the reaction UTP + L-glutamine + ATP + H2O = CTP + L-glutamate + ADP + phosphate + 2 H(+). It catalyses the reaction L-glutamine + H2O = L-glutamate + NH4(+). The enzyme catalyses UTP + NH4(+) + ATP = CTP + ADP + phosphate + 2 H(+). It functions in the pathway pyrimidine metabolism; CTP biosynthesis via de novo pathway; CTP from UDP: step 2/2. Its activity is regulated as follows. Allosterically activated by GTP, when glutamine is the substrate; GTP has no effect on the reaction when ammonia is the substrate. The allosteric effector GTP functions by stabilizing the protein conformation that binds the tetrahedral intermediate(s) formed during glutamine hydrolysis. Inhibited by the product CTP, via allosteric rather than competitive inhibition. Catalyzes the ATP-dependent amination of UTP to CTP with either L-glutamine or ammonia as the source of nitrogen. Regulates intracellular CTP levels through interactions with the four ribonucleotide triphosphates. The polypeptide is CTP synthase (Helicobacter pylori (strain HPAG1)).